A 489-amino-acid chain; its full sequence is MSRRNFKVLYVSGEVSPFVRISPLADFMASFPQAIEEEGFEARIMMPKYGTINDRKFRLHDVLRLSDIEVDLKEKVDLLNVKVTALPSSKIQTYFLYNEKYFKRNGLFTDIHNGSDLKGSTDKVVFFNVGVLETLQRLGWKPDIIHCHDWHAALIPLLLKTVYASHEFFRDIKTVFTIHNIYRQGILPMKAFQKLLPEEVSSALHCSNDEVNMLYTGVEHADLLTTTSKVYAEEIVHDGLQTYGLGRVLEEHQAKFYGILNGIDSRQWNSAADKLIKKRYSLEHMDGKLDNKKALLEEAGLPYTEGTPVVGVILNFDEFQGAELLQQSLEQLAALDIQLIISGSGDKKYEKVFQDFALEHPEQVSVHGEYSDSFFHLAIAGLDILLMPGMIESCGMIQMFAMNYGTIPVAYAGGGIVETIEERDEESGSGFIFHDYSAESLVGKLEEALACFHDEESWQQIVMTAMTRDFTWKKSAEEYDQLYRELLEP.

Residue Arg20 participates in ADP-alpha-D-glucose binding.

Belongs to the glycosyltransferase 1 family. Bacterial/plant glycogen synthase subfamily.

It carries out the reaction [(1-&gt;4)-alpha-D-glucosyl](n) + ADP-alpha-D-glucose = [(1-&gt;4)-alpha-D-glucosyl](n+1) + ADP + H(+). Its pathway is glycan biosynthesis; glycogen biosynthesis. Its function is as follows. Synthesizes alpha-1,4-glucan chains using ADP-glucose. This Pelodictyon phaeoclathratiforme (strain DSM 5477 / BU-1) protein is Glycogen synthase.